We begin with the raw amino-acid sequence, 154 residues long: Putative pre-16S rRNA nuclease (154 aa).

This sequence belongs to the YqgF nuclease family.

The protein localises to the cytoplasm. In terms of biological role, could be a nuclease involved in processing of the 5'-end of pre-16S rRNA. In Pelotomaculum thermopropionicum (strain DSM 13744 / JCM 10971 / SI), this protein is Putative pre-16S rRNA nuclease.